The chain runs to 211 residues: Thymidylate kinase (211 aa).

Position 11 to 18 (11 to 18 (GPDGAGKT)) interacts with ATP.

This sequence belongs to the thymidylate kinase family.

The enzyme catalyses dTMP + ATP = dTDP + ADP. Its function is as follows. Phosphorylation of dTMP to form dTDP in both de novo and salvage pathways of dTTP synthesis. In Streptococcus equi subsp. equi (strain 4047), this protein is Thymidylate kinase.